Reading from the N-terminus, the 197-residue chain is Thymidine kinase (197 aa).

ATP is bound by residues 9-16 (SAMDAGKT) and 87-90 (DEIH). Glu-88 functions as the Proton acceptor in the catalytic mechanism. Zn(2+) contacts are provided by Cys-145, Cys-147, Cys-187, and His-190.

Belongs to the thymidine kinase family. As to quaternary structure, homotetramer.

It localises to the cytoplasm. The enzyme catalyses thymidine + ATP = dTMP + ADP + H(+). This Francisella tularensis subsp. tularensis (strain SCHU S4 / Schu 4) protein is Thymidine kinase.